A 375-amino-acid chain; its full sequence is All-trans-retinol dehydrogenase [NAD(+)] ADH1B (375 aa).

Position 2 is an N-acetylserine (Ser-2). Position 23 is a phosphoserine (Ser-23). Tyr-35 is subject to Phosphotyrosine. The Zn(2+) site is built by Cys-47, His-68, Cys-98, Cys-101, Cys-104, Cys-112, and Cys-175. NAD(+)-binding positions include 200–205 (GLGGVG), Asp-224, Lys-229, 293–295 (VGV), and Arg-370.

It belongs to the zinc-containing alcohol dehydrogenase family. Homodimer or heterodimer of closely related subunits. Zn(2+) serves as cofactor.

It is found in the cytoplasm. The enzyme catalyses all-trans-retinol + NAD(+) = all-trans-retinal + NADH + H(+). It catalyses the reaction all-trans-4-hydroxyretinol + NAD(+) = all-trans-4-hydroxyretinal + NADH + H(+). It carries out the reaction all-trans-4-oxoretinol + NAD(+) = all-trans-4-oxoretinal + NADH + H(+). In terms of biological role, catalyzes the NAD-dependent oxidation of all-trans-retinol and its derivatives such as all-trans-4-hydroxyretinol and may participate in retinoid metabolism. In vitro can also catalyze the NADH-dependent reduction of all-trans-retinal and its derivatives such as all-trans-4-oxoretinal. Catalyzes in the oxidative direction with higher efficiency. Has the same affinity for all-trans-4-hydroxyretinol and all-trans-4-oxoretinal. In Pan troglodytes (Chimpanzee), this protein is All-trans-retinol dehydrogenase [NAD(+)] ADH1B.